Reading from the N-terminus, the 509-residue chain is Maturase K (509 aa).

The protein belongs to the intron maturase 2 family. MatK subfamily.

The protein localises to the plastid. It localises to the chloroplast. Usually encoded in the trnK tRNA gene intron. Probably assists in splicing its own and other chloroplast group II introns. The protein is Maturase K of Nymphaea odorata (White water lily).